Consider the following 600-residue polypeptide: Arginine--tRNA ligase (600 aa).

Residues 123–133 (PNVAKPMHVGH) carry the 'HIGH' region motif.

This sequence belongs to the class-I aminoacyl-tRNA synthetase family. As to quaternary structure, monomer.

The protein localises to the cytoplasm. The enzyme catalyses tRNA(Arg) + L-arginine + ATP = L-arginyl-tRNA(Arg) + AMP + diphosphate. The chain is Arginine--tRNA ligase from Caulobacter vibrioides (strain NA1000 / CB15N) (Caulobacter crescentus).